A 238-amino-acid chain; its full sequence is 1-(5-phosphoribosyl)-5-[(5-phosphoribosylamino)methylideneamino] imidazole-4-carboxamide isomerase (238 aa).

The active-site Proton acceptor is the Asp8. Residue Asp130 is the Proton donor of the active site.

The protein belongs to the HisA/HisF family.

It localises to the cytoplasm. The catalysed reaction is 1-(5-phospho-beta-D-ribosyl)-5-[(5-phospho-beta-D-ribosylamino)methylideneamino]imidazole-4-carboxamide = 5-[(5-phospho-1-deoxy-D-ribulos-1-ylimino)methylamino]-1-(5-phospho-beta-D-ribosyl)imidazole-4-carboxamide. It participates in amino-acid biosynthesis; L-histidine biosynthesis; L-histidine from 5-phospho-alpha-D-ribose 1-diphosphate: step 4/9. This Methanococcus maripaludis (strain C6 / ATCC BAA-1332) protein is 1-(5-phosphoribosyl)-5-[(5-phosphoribosylamino)methylideneamino] imidazole-4-carboxamide isomerase.